Reading from the N-terminus, the 151-residue chain is S-ribosylhomocysteine lyase (151 aa).

Fe cation-binding residues include His-54, His-58, and Cys-121.

Belongs to the LuxS family. As to quaternary structure, homodimer. Fe cation serves as cofactor.

It carries out the reaction S-(5-deoxy-D-ribos-5-yl)-L-homocysteine = (S)-4,5-dihydroxypentane-2,3-dione + L-homocysteine. Functionally, involved in the synthesis of autoinducer 2 (AI-2) which is secreted by bacteria and is used to communicate both the cell density and the metabolic potential of the environment. The regulation of gene expression in response to changes in cell density is called quorum sensing. Catalyzes the transformation of S-ribosylhomocysteine (RHC) to homocysteine (HC) and 4,5-dihydroxy-2,3-pentadione (DPD). This Clostridium botulinum (strain Alaska E43 / Type E3) protein is S-ribosylhomocysteine lyase.